Here is a 202-residue protein sequence, read N- to C-terminus: Orotate phosphoribosyltransferase (202 aa).

Residues lysine 93 and 113 to 121 (EDIITTGGS) each bind 5-phospho-alpha-D-ribose 1-diphosphate. 2 residues coordinate orotate: threonine 117 and arginine 145.

The protein belongs to the purine/pyrimidine phosphoribosyltransferase family. PyrE subfamily. In terms of assembly, homodimer. Mg(2+) serves as cofactor.

The catalysed reaction is orotidine 5'-phosphate + diphosphate = orotate + 5-phospho-alpha-D-ribose 1-diphosphate. The protein operates within pyrimidine metabolism; UMP biosynthesis via de novo pathway; UMP from orotate: step 1/2. Its function is as follows. Catalyzes the transfer of a ribosyl phosphate group from 5-phosphoribose 1-diphosphate to orotate, leading to the formation of orotidine monophosphate (OMP). The sequence is that of Orotate phosphoribosyltransferase from Campylobacter jejuni subsp. jejuni serotype O:2 (strain ATCC 700819 / NCTC 11168).